The primary structure comprises 107 residues: MRDMMGMMKQAKELQAKMKAMQDEIATMEASASSGGGLVTITLSGKGTLSALKIDPSLMKEEEVEILEDLIIAAHNDAKAKLEAAMAEKTQSLTAGLPIPPGFKLPF.

Belongs to the YbaB/EbfC family. In terms of assembly, homodimer.

It is found in the cytoplasm. The protein localises to the nucleoid. Its function is as follows. Binds to DNA and alters its conformation. May be involved in regulation of gene expression, nucleoid organization and DNA protection. This Brucella anthropi (strain ATCC 49188 / DSM 6882 / CCUG 24695 / JCM 21032 / LMG 3331 / NBRC 15819 / NCTC 12168 / Alc 37) (Ochrobactrum anthropi) protein is Nucleoid-associated protein Oant_0022.